Reading from the N-terminus, the 334-residue chain is Formamidase (334 aa).

A CN hydrolase domain is found at 14 to 260; the sequence is FLVAAIQFPV…WEIVTGEIYP (247 aa). Catalysis depends on Glu60, which acts as the Proton acceptor. Lys133 acts as the Proton donor in catalysis. Catalysis depends on Cys166, which acts as the Nucleophile.

The protein belongs to the carbon-nitrogen hydrolase superfamily. Aliphatic amidase family. Homotetramer.

The enzyme catalyses formamide + H2O = formate + NH4(+). Inhibited by iodoacetate. Appears to be regulated by the fur protein, but this effect is not mediated at the transcriptional level. Its function is as follows. Is an aliphatic amidase with a restricted substrate specificity, as it only hydrolyzes formamide. Probably involved in the nitrogen metabolism of H.pylori. The chain is Formamidase (amiF) from Helicobacter pylori (strain ATCC 700392 / 26695) (Campylobacter pylori).